The chain runs to 232 residues: Peptide deformylase (232 aa).

Fe cation is bound by residues C135 and H178. E179 is a catalytic residue. A Fe cation-binding site is contributed by H182.

It belongs to the polypeptide deformylase family. Requires Fe(2+) as cofactor.

The catalysed reaction is N-terminal N-formyl-L-methionyl-[peptide] + H2O = N-terminal L-methionyl-[peptide] + formate. Functionally, removes the formyl group from the N-terminal Met of newly synthesized proteins. Requires at least a dipeptide for an efficient rate of reaction. N-terminal L-methionine is a prerequisite for activity but the enzyme has broad specificity at other positions. This chain is Peptide deformylase, found in Deinococcus radiodurans (strain ATCC 13939 / DSM 20539 / JCM 16871 / CCUG 27074 / LMG 4051 / NBRC 15346 / NCIMB 9279 / VKM B-1422 / R1).